The sequence spans 118 residues: Putative cytochrome P450 family member 4F30 (118 aa).

A disordered region spans residues 1 to 64 (MVTPAGCLGG…GPLHILGTDG (64 aa)). Over residues 28–43 (RAGQTGQAVSGAQVSS) the composition is skewed to polar residues.

This Homo sapiens (Human) protein is Putative cytochrome P450 family member 4F30 (CYP4F30P).